The following is a 361-amino-acid chain: Probable dual-specificity RNA methyltransferase RlmN (361 aa).

E104 functions as the Proton acceptor in the catalytic mechanism. Residues 110–343 (HEYGNSVCVT…VTIRREQGHD (234 aa)) enclose the Radical SAM core domain. C117 and C348 are joined by a disulfide. [4Fe-4S] cluster contacts are provided by C124, C128, and C131. S-adenosyl-L-methionine is bound by residues 174–175 (GE), S206, 229–231 (SLH), and N305. C348 serves as the catalytic S-methylcysteine intermediate.

Belongs to the radical SAM superfamily. RlmN family. [4Fe-4S] cluster is required as a cofactor.

The protein resides in the cytoplasm. It carries out the reaction adenosine(2503) in 23S rRNA + 2 reduced [2Fe-2S]-[ferredoxin] + 2 S-adenosyl-L-methionine = 2-methyladenosine(2503) in 23S rRNA + 5'-deoxyadenosine + L-methionine + 2 oxidized [2Fe-2S]-[ferredoxin] + S-adenosyl-L-homocysteine. It catalyses the reaction adenosine(37) in tRNA + 2 reduced [2Fe-2S]-[ferredoxin] + 2 S-adenosyl-L-methionine = 2-methyladenosine(37) in tRNA + 5'-deoxyadenosine + L-methionine + 2 oxidized [2Fe-2S]-[ferredoxin] + S-adenosyl-L-homocysteine. Specifically methylates position 2 of adenine 2503 in 23S rRNA and position 2 of adenine 37 in tRNAs. This is Probable dual-specificity RNA methyltransferase RlmN from Bacillus licheniformis (strain ATCC 14580 / DSM 13 / JCM 2505 / CCUG 7422 / NBRC 12200 / NCIMB 9375 / NCTC 10341 / NRRL NRS-1264 / Gibson 46).